Reading from the N-terminus, the 101-residue chain is Co-chaperonin GroES (101 aa).

It belongs to the GroES chaperonin family. As to quaternary structure, heptamer of 7 subunits arranged in a ring. Interacts with the chaperonin GroEL.

It localises to the cytoplasm. Its function is as follows. Together with the chaperonin GroEL, plays an essential role in assisting protein folding. The GroEL-GroES system forms a nano-cage that allows encapsulation of the non-native substrate proteins and provides a physical environment optimized to promote and accelerate protein folding. GroES binds to the apical surface of the GroEL ring, thereby capping the opening of the GroEL channel. This Thermus thermophilus (strain ATCC BAA-163 / DSM 7039 / HB27) protein is Co-chaperonin GroES.